The primary structure comprises 773 residues: Phenylalanine--tRNA ligase beta subunit (773 aa).

The tRNA-binding domain maps to 39–150 (LKAPDKVVVG…GKLELGRPLN (112 aa)). In terms of domain architecture, B5 spans 391–467 (KELPIIPISI…RIIGIDNIAS (77 aa)). Positions 445, 451, 454, and 455 each coordinate Mg(2+). Residues 682–773 (SKFPAITRDL…TLKNLGLDLR (92 aa)) form the FDX-ACB domain.

This sequence belongs to the phenylalanyl-tRNA synthetase beta subunit family. Type 1 subfamily. Tetramer of two alpha and two beta subunits. Mg(2+) serves as cofactor.

The protein localises to the cytoplasm. It carries out the reaction tRNA(Phe) + L-phenylalanine + ATP = L-phenylalanyl-tRNA(Phe) + AMP + diphosphate + H(+). This Campylobacter jejuni subsp. jejuni serotype O:2 (strain ATCC 700819 / NCTC 11168) protein is Phenylalanine--tRNA ligase beta subunit (pheT).